The chain runs to 175 residues: Adenine phosphoribosyltransferase (175 aa).

The protein belongs to the purine/pyrimidine phosphoribosyltransferase family. Homodimer.

It is found in the cytoplasm. The catalysed reaction is AMP + diphosphate = 5-phospho-alpha-D-ribose 1-diphosphate + adenine. It functions in the pathway purine metabolism; AMP biosynthesis via salvage pathway; AMP from adenine: step 1/1. Its function is as follows. Catalyzes a salvage reaction resulting in the formation of AMP, that is energically less costly than de novo synthesis. The chain is Adenine phosphoribosyltransferase from Clavibacter michiganensis subsp. michiganensis (strain NCPPB 382).